The following is a 662-amino-acid chain: Zinc finger protein 800 (662 aa).

The C2H2-type 1; degenerate zinc-finger motif lies at 69–91 (FECKLCRSLFRGLPNLITHKKFY). Residue K132 forms a Glycyl lysine isopeptide (Lys-Gly) (interchain with G-Cter in SUMO2) linkage. Disordered stretches follow at residues 172 to 197 (ETSS…PPSI) and 205 to 224 (AAPT…TSDS). Low complexity predominate over residues 205-216 (AAPTEEQPQESQ). The C2H2-type 2 zinc finger occupies 231 to 254 (LICCLCRKEFNSRRGVRRHIRKVH). K280 is covalently cross-linked (Glycyl lysine isopeptide (Lys-Gly) (interchain with G-Cter in SUMO2)). A C2H2-type 3 zinc finger spans residues 288-311 (RSCPVCCKSFATKANVRRHFDEVH). At S318 the chain carries Phosphoserine. Positions 319–349 (ITPDIATKPGQPLFLDSASPKKSFKTRKQKS) are disordered. A Phosphothreonine modification is found at T320. At S337 the chain carries Phosphoserine. The segment covering 340–349 (KSFKTRKQKS) has biased composition (basic residues). Residues 357–382 (TACKCLLCKRKYSSQIMLKRHMQIVH) form a C2H2-type 4 zinc finger. Residues 389 to 473 (ANSKREKGPN…AGGQQKTRKP (85 aa)) are disordered. A Glycyl lysine isopeptide (Lys-Gly) (interchain with G-Cter in SUMO2) cross-link involves residue K392. Positions 414-434 (VESSPPSITHSPQNELKGTNH) are enriched in polar residues. Phosphoserine is present on residues S420, S424, S453, S455, S458, and S460. The span at 456-468 (PKSASPSAAGGQQ) shows a compositional bias: low complexity. A Glycyl lysine isopeptide (Lys-Gly) (interchain with G-Cter in SUMO2) cross-link involves residue K474. 2 C2H2-type zinc fingers span residues 484–506 (LYCK…IELH) and 517–540 (YKCP…TVVH). 2 disordered regions span residues 573-597 (RGPS…PSKK) and 633-662 (HHKK…KALV). The span at 575–587 (PSREEAKHNDSKQ) shows a compositional bias: basic and acidic residues. A Glycyl lysine isopeptide (Lys-Gly) (interchain with G-Cter in SUMO2) cross-link involves residue K597. A C2H2-type 7 zinc finger spans residues 616 to 638 (HRCNKCGKAFAKKTYLEHHKKTH). Residues 651 to 662 (TKGRSTRSKALV) show a composition bias toward basic residues.

This sequence belongs to the krueppel C2H2-type zinc-finger protein family.

It localises to the nucleus. In terms of biological role, may be involved in transcriptional regulation. The protein is Zinc finger protein 800 (Znf800) of Mus musculus (Mouse).